The primary structure comprises 579 residues: Adenine/guanine permease AZG1 (579 aa).

12 helical membrane passes run 52–72, 131–151, 183–203, 221–241, 260–280, 292–312, 320–340, 379–399, 414–434, 459–479, 480–500, and 514–534; these read AGTA…SILS, LIVA…LMAN, TALA…AIGF, AGIG…IGLV, ISLA…AGGS, MESP…YCLV, IYGI…VTAF, FWEA…GTLY, FAGQ…GSLL, AITV…LASI, PAWA…KSVT, and FVTM…IGGI.

The protein belongs to the nucleobase:cation symporter-2 (NCS2) (TC 2.A.40) family. Azg-like subfamily.

The protein resides in the membrane. In terms of biological role, transports natural purines (adenine and guanine) as well as purine analogs. Confers sensitivity to 8-azaadenine and 8-azaguanine (8-azg). The chain is Adenine/guanine permease AZG1 (AZG1) from Arabidopsis thaliana (Mouse-ear cress).